We begin with the raw amino-acid sequence, 679 residues long: Biosynthetic arginine decarboxylase (679 aa).

Residues 1–43 are disordered; that stretch reads MKHRGQEEMGVESTATSDEVVKVPANGNKLEGKNHKQKKLLPT. Lys149 is subject to N6-(pyridoxal phosphate)lysine. Position 331-341 (331-341) interacts with substrate; it reads LDVGGGLGVDY.

Belongs to the Orn/Lys/Arg decarboxylase class-II family. SpeA subfamily. Mg(2+) is required as a cofactor. It depends on pyridoxal 5'-phosphate as a cofactor.

The enzyme catalyses L-arginine + H(+) = agmatine + CO2. Catalyzes the biosynthesis of agmatine from arginine. This is Biosynthetic arginine decarboxylase from Nostoc sp. (strain PCC 7120 / SAG 25.82 / UTEX 2576).